A 41-amino-acid polypeptide reads, in one-letter code: Conotoxin Bu22 (41 aa).

Positions 1–25 are excised as a propeptide; it reads SDRASDGRNAAANDRASDLVALTVR. 2 cysteine pairs are disulfide-bonded: Cys-27/Cys-33 and Cys-28/Cys-40.

Belongs to the conotoxin A superfamily. In terms of tissue distribution, expressed by the venom duct.

The protein localises to the secreted. The sequence is that of Conotoxin Bu22 from Conus bullatus (Bubble cone).